The primary structure comprises 209 residues: Protein GET1 (209 aa).

Over 1–3 (MSL) the chain is Lumenal. A helical transmembrane segment spans residues 4-23 (LLVIFLLELVVQLVNTIGAK). Over 24–110 (TINNLLWRFY…SFSRKLTIYR (87 aa)) the chain is Cytoplasmic. The stretch at 74-101 (WARLQRKHDKLMDELEKKKSQLDAHRTS) forms a coiled coil. Residues 111–131 (WILTRGMQWFLCFWFSSQPMF) form a helical membrane-spanning segment. Residues 132-155 (WLPYGWFPYWVEWLVSFPNAPMGS) are Lumenal-facing. A helical transmembrane segment spans residues 156-172 (VSIVVWQSACSGVLALV). The Cytoplasmic segment spans residues 173 to 209 (IEAVMAVVRYTGGTGMQKQRQPVPAAGGAPGTSKKDL). A disordered region spans residues 188–209 (MQKQRQPVPAAGGAPGTSKKDL).

This sequence belongs to the WRB/GET1 family. Interacts with GET3.

It localises to the endoplasmic reticulum membrane. Functionally, required for the post-translational delivery of tail-anchored (TA) proteins to the endoplasmic reticulum. Acts as a membrane receptor for soluble GET3, which recognizes and selectively binds the transmembrane domain of TA proteins in the cytosol. The protein is Protein GET1 of Chaetomium thermophilum (strain DSM 1495 / CBS 144.50 / IMI 039719) (Thermochaetoides thermophila).